The sequence spans 1116 residues: Protein translocase subunit SecA (1116 aa).

Residues glutamine 177, 195-199, and aspartate 692 contribute to the ATP site; that span reads GEGKT.

The protein belongs to the SecA family. As to quaternary structure, monomer and homodimer. Part of the essential Sec protein translocation apparatus which comprises SecA, SecYEG and auxiliary proteins SecDF. Other proteins may also be involved.

It localises to the cell inner membrane. Its subcellular location is the cytoplasm. It carries out the reaction ATP + H2O + cellular proteinSide 1 = ADP + phosphate + cellular proteinSide 2.. Its function is as follows. Part of the Sec protein translocase complex. Interacts with the SecYEG preprotein conducting channel. Has a central role in coupling the hydrolysis of ATP to the transfer of proteins into and across the cell membrane, serving as an ATP-driven molecular motor driving the stepwise translocation of polypeptide chains across the membrane. The chain is Protein translocase subunit SecA from Flavobacterium psychrophilum (strain ATCC 49511 / DSM 21280 / CIP 103535 / JIP02/86).